An 885-amino-acid polypeptide reads, in one-letter code: MGEQATYDHHAIEQHWQREWDDADVFRVPDDADDPEYVLAMFPYTSGQLHMGHVRNYAITDAFARYRRMDGEDVLHPMGWDSFGLPAENAANERDTNPREWTERCIDQMRDQFEALGFGYDWEREITTCDPDYYKWNQWLFTEFRDAGLVDRRAATVNWCPSCETVLADEQVEGDDELCWRCDTPVTERDLDQWFFETTAYADELLDGLDELDGWPSNVRDMQRNWVGRTDGVEVPFTVHTPDGDEDVVAFTTRVDTIHGATYFALAPDHPLAEAAADRDDDVAHFVEEVADPDGDEPQGVETEFTATNPATGAEIPVVVADFVLSDVGTGALMAVPAHDDRDHEFAQAHDLPVRQVVAPAGDEDADVEAAAYTADGVLVNAGDYTGLDSETAREELTADIDGAASAVQYQLRDWGVSRQRYWGTPIPIVHCESCGPVSVPDDDLPVELPEFVHTTGNPLDAAEDWKQTTCPDCGAPAVRETDTMDTFLDSSWYFLRFASPAFDDAPFDTQRANDWLPVDEYVGGDEHAVMHLLYSRFVTKAFADLDMLEHREPFAGLTTQGMVLGEDGTKMSKSKDNGVAPERIVDEYGADTARLFTLRAARPSKAFPWSEEGVRSSHTFLERLLSMARAVNADATADGDLDPAAEYVARETAATVQAATTHFDDMEFNRAVQAVDELVSLLVRYRDRDDAAPAVVARGVTAAVKLLAPIAPHVAEECWTALGGDGFVAEAAWPTPDRDVSDHDRATSLIEQTREDVRDIVDTAGIENPTGVDVVTAPEWMYDVLARAKAADGNVVGSVMSDQSLQQHGEDAADYAKDLAAQAPAFPDVLGPDGERDALGRAVWLLEAEFDAPVRVLAAEDAADSVANKAEPGRPAIHVDEADD.

Residues 43–53 (PYTSGQLHMGH) carry the 'HIGH' region motif. Positions 571 to 575 (KMSKS) match the 'KMSKS' region motif. An ATP-binding site is contributed by lysine 574. Residues 866 to 885 (SVANKAEPGRPAIHVDEADD) are disordered.

It belongs to the class-I aminoacyl-tRNA synthetase family.

It localises to the cytoplasm. It carries out the reaction tRNA(Leu) + L-leucine + ATP = L-leucyl-tRNA(Leu) + AMP + diphosphate. The polypeptide is Leucine--tRNA ligase (Halobacterium salinarum (strain ATCC 700922 / JCM 11081 / NRC-1) (Halobacterium halobium)).